The sequence spans 359 residues: Quinolinate synthase (359 aa).

Residues His-81 and Ser-99 each contribute to the iminosuccinate site. Cys-144 provides a ligand contact to [4Fe-4S] cluster. Residues 170 to 172 (YVN) and Ser-187 each bind iminosuccinate. Cys-229 serves as a coordination point for [4Fe-4S] cluster. Iminosuccinate is bound by residues 255–257 (HPE) and Thr-272. Residue Cys-315 coordinates [4Fe-4S] cluster.

The protein belongs to the quinolinate synthase family. Type 2 subfamily. It depends on [4Fe-4S] cluster as a cofactor.

The protein resides in the cytoplasm. The catalysed reaction is iminosuccinate + dihydroxyacetone phosphate = quinolinate + phosphate + 2 H2O + H(+). Its pathway is cofactor biosynthesis; NAD(+) biosynthesis; quinolinate from iminoaspartate: step 1/1. Catalyzes the condensation of iminoaspartate with dihydroxyacetone phosphate to form quinolinate. The chain is Quinolinate synthase from Sinorhizobium medicae (strain WSM419) (Ensifer medicae).